The sequence spans 629 residues: LEAF RUST 10 DISEASE-RESISTANCE LOCUS RECEPTOR-LIKE PROTEIN KINASE-like 1.1 (629 aa).

Residues 1–19 (METVSVLLFFFLFLLAAEA) form the signal peptide. Over 20 to 225 (RSTKRTGCKD…PNNYHAEMRL (206 aa)) the chain is Extracellular. 6 N-linked (GlcNAc...) asparagine glycosylation sites follow: asparagine 56, asparagine 92, asparagine 123, asparagine 124, asparagine 172, and asparagine 177. Residues 226 to 246 (GLGIGGSVILIIILVALFAVI) traverse the membrane as a helical segment. The Cytoplasmic portion of the chain corresponds to 247–629 (HRNYRRKDGS…TTPNTSAYEF (383 aa)). One can recognise a Protein kinase domain in the interval 291 to 565 (FSKDRLLGDG…TMEQVVHELK (275 aa)). ATP is bound by residues 297–305 (LGDGGFGTV) and lysine 319. The residue at position 365 (tyrosine 365) is a Phosphotyrosine. The Proton acceptor role is filled by aspartate 416. At serine 449 the chain carries Phosphoserine. A phosphothreonine mark is found at threonine 450 and threonine 455. Tyrosine 463 is modified (phosphotyrosine). Residues 609–629 (VSVTDQWTSKSTTPNTSAYEF) form a disordered region.

It belongs to the protein kinase superfamily. Ser/Thr protein kinase family.

The protein resides in the cell membrane. The enzyme catalyses L-seryl-[protein] + ATP = O-phospho-L-seryl-[protein] + ADP + H(+). The catalysed reaction is L-threonyl-[protein] + ATP = O-phospho-L-threonyl-[protein] + ADP + H(+). This Arabidopsis thaliana (Mouse-ear cress) protein is LEAF RUST 10 DISEASE-RESISTANCE LOCUS RECEPTOR-LIKE PROTEIN KINASE-like 1.1.